The primary structure comprises 158 residues: MGVFNVEDEITSVVAPAILYKALVTDADNLTPKVIDAIKSIEIVEGNGGAGTIKKLTFVEDGETKHVLHKVELVDVANLAYNYSIVGGVGFPDTVEKISFEAKLSAGPNGGSIAKLSVKYFTKGDAAPSEEQLKTDKAKGDGLFKALEGYCLAHPDYN.

This sequence belongs to the BetVI family.

This Pisum sativum (Garden pea) protein is Disease resistance response protein Pi49 (DRR49A).